Consider the following 183-residue polypeptide: Helofensin-2 (183 aa).

The N-terminal stretch at 1 to 26 is a signal peptide; the sequence is MQMDWLFIAVISGIGLLSSGVPGTQG. A C(6)C(4)C(9)C(6)CC 1; approximate repeat occupies 27 to 64; that stretch reads AYTTEQCRALNGSCNFYACFPKNVIIGKCDWWGWSCCA. The C(6)C(4)C(9)C(6)CC 2; approximate repeat unit spans residues 65–101; it reads RTPLERCTAKKGTCTKTGCTKTDTDHGPCDGGAQCCQ. Residues 102–139 form a C(6)C(4)C(9)C(6)CC 3; approximate repeat; sequence RDPVKYCKFHGNVCGRGKCPMDHIPIGEQCMPGYPCCK. Residues 140 to 177 form a C(6)C(4)C(9)C(6)CC 4; approximate repeat; the sequence is RDGPAYCKSKGGKCLRRCSQIVPTDIIGVCADGVPCCK.

Belongs to the beta-defensin family. Helofensin subfamily. Expressed by the mandibular venom gland.

It is found in the secreted. Its function is as follows. Lethal toxin which possesses an inhibitory effect on direct electrical stimulation of the isolated hemi-diaphragm of mice. Neither hemorrhagic nor hemolytic activities are detected. Phospholipase A2 activity, proteolytic activity and arginine esterolytic activity are absent. The sequence is that of Helofensin-2 from Heloderma suspectum cinctum (Banded Gila monster).